A 518-amino-acid chain; its full sequence is Light-independent protochlorophyllide reductase subunit B (518 aa).

Residue Asp-36 coordinates [4Fe-4S] cluster. Asp-299 (proton donor) is an active-site residue. 434–435 (GM) is a binding site for substrate.

It belongs to the ChlB/BchB/BchZ family. Protochlorophyllide reductase is composed of three subunits; ChlL, ChlN and ChlB. Forms a heterotetramer of two ChlB and two ChlN subunits. It depends on [4Fe-4S] cluster as a cofactor.

Its subcellular location is the plastid. The protein resides in the chloroplast. It carries out the reaction chlorophyllide a + oxidized 2[4Fe-4S]-[ferredoxin] + 2 ADP + 2 phosphate = protochlorophyllide a + reduced 2[4Fe-4S]-[ferredoxin] + 2 ATP + 2 H2O. Its pathway is porphyrin-containing compound metabolism; chlorophyll biosynthesis (light-independent). Functionally, component of the dark-operative protochlorophyllide reductase (DPOR) that uses Mg-ATP and reduced ferredoxin to reduce ring D of protochlorophyllide (Pchlide) to form chlorophyllide a (Chlide). This reaction is light-independent. The NB-protein (ChlN-ChlB) is the catalytic component of the complex. The chain is Light-independent protochlorophyllide reductase subunit B from Adiantum capillus-veneris (Maidenhair fern).